A 98-amino-acid chain; its full sequence is Large ribosomal subunit protein uL23 (98 aa).

This sequence belongs to the universal ribosomal protein uL23 family. In terms of assembly, part of the 50S ribosomal subunit. Contacts protein L29, and trigger factor when it is bound to the ribosome.

Its function is as follows. One of the early assembly proteins it binds 23S rRNA. One of the proteins that surrounds the polypeptide exit tunnel on the outside of the ribosome. Forms the main docking site for trigger factor binding to the ribosome. In Cereibacter sphaeroides (strain ATCC 17025 / ATH 2.4.3) (Rhodobacter sphaeroides), this protein is Large ribosomal subunit protein uL23.